Here is a 952-residue protein sequence, read N- to C-terminus: DNA topoisomerase 1 (952 aa).

The 124-residue stretch at 12–135 (RRLVIVESPA…VKRMVFHEIT (124 aa)) folds into the Toprim domain. Residues Glu18 and Asp104 each coordinate Mg(2+). The region spanning 150–602 (NQKLVDAQET…RFYFGEGDGT (453 aa)) is the Topo IA-type catalytic domain. The tract at residues 184-189 (SAGRVQ) is interaction with DNA. Catalysis depends on Tyr334, which acts as the O-(5'-phospho-DNA)-tyrosine intermediate. The disordered stretch occupies residues 847–952 (RFGPYVTDGE…KATASKTSED (106 aa)). Residues 871 to 884 (TPERGYELLAEKRA) show a composition bias toward basic and acidic residues. Residues 885-906 (KGPAKKTAKKAVKKTAAKKAPA) are compositionally biased toward basic residues. 2 stretches are compositionally biased toward low complexity: residues 907–930 (KKAA…AAKS) and 937–952 (AKTA…TSED).

The protein belongs to the type IA topoisomerase family. In terms of assembly, monomer. Mg(2+) is required as a cofactor.

The enzyme catalyses ATP-independent breakage of single-stranded DNA, followed by passage and rejoining.. Releases the supercoiling and torsional tension of DNA, which is introduced during the DNA replication and transcription, by transiently cleaving and rejoining one strand of the DNA duplex. Introduces a single-strand break via transesterification at a target site in duplex DNA. The scissile phosphodiester is attacked by the catalytic tyrosine of the enzyme, resulting in the formation of a DNA-(5'-phosphotyrosyl)-enzyme intermediate and the expulsion of a 3'-OH DNA strand. The free DNA strand then undergoes passage around the unbroken strand, thus removing DNA supercoils. Finally, in the religation step, the DNA 3'-OH attacks the covalent intermediate to expel the active-site tyrosine and restore the DNA phosphodiester backbone. Its function is as follows. Relaxes supercoiled plasmid in vitro; in the presence of sIHF (integration host factor) relaxation is decreased. This chain is DNA topoisomerase 1, found in Streptomyces coelicolor (strain ATCC BAA-471 / A3(2) / M145).